The chain runs to 370 residues: Formate dehydrogenase (370 aa).

2 residues coordinate substrate: isoleucine 94 and asparagine 120. Residues 175-176, aspartate 196, 231-235, threonine 257, aspartate 283, and 312-315 each bind NAD(+); these read RI, PLHES, and HMSG.

It belongs to the D-isomer specific 2-hydroxyacid dehydrogenase family. FDH subfamily. As to quaternary structure, homodimer.

It localises to the cytoplasm. The catalysed reaction is formate + NAD(+) = CO2 + NADH. In terms of biological role, catalyzes the NAD(+)-dependent oxidation of formate to carbon dioxide. Formate oxidation is the final step in the methanol oxidation pathway in methylotrophic microorganisms. Has a role in the detoxification of exogenous formate in non-methylotrophic organisms. The protein is Formate dehydrogenase of Chaetomium thermophilum (strain DSM 1495 / CBS 144.50 / IMI 039719) (Thermochaetoides thermophila).